The chain runs to 44 residues: Photosystem I reaction center subunit IX (44 aa).

A helical transmembrane segment spans residues 7–27 (YLSVAPVLSTLWFASLAGLLI).

It belongs to the PsaJ family.

Its subcellular location is the plastid. The protein localises to the chloroplast thylakoid membrane. May help in the organization of the PsaE and PsaF subunits. This chain is Photosystem I reaction center subunit IX, found in Barbarea verna (Land cress).